A 571-amino-acid polypeptide reads, in one-letter code: uncharacterized protein (571 aa).

The tract at residues 1–25 (MAPSVATSLKAEILPSPRTSSPSSN) is disordered. The 255-residue stretch at 135–389 (FSVFPAPILD…RGLHKNAFAT (255 aa)) folds into the FAD-binding FR-type domain. Positions 447 to 479 (NPLQKSSDDDASSTVSQQTETEMDSFEVKKDGT) are disordered.

The protein belongs to the flavoprotein pyridine nucleotide cytochrome reductase family. The cofactor is FAD.

This is an uncharacterized protein from Schizosaccharomyces pombe (strain 972 / ATCC 24843) (Fission yeast).